The following is a 487-amino-acid chain: Putative sugar kinase YoaC (487 aa).

Belongs to the FGGY kinase family.

The sequence is that of Putative sugar kinase YoaC (yoaC) from Bacillus subtilis (strain 168).